The chain runs to 310 residues: Probable cell division protein WhiA (310 aa).

Residues 274–308 (SLKELGTLVPGGPISKSGINHRLRKINQFAEQLQK) constitute a DNA-binding region (H-T-H motif).

Belongs to the WhiA family.

In terms of biological role, involved in cell division and chromosome segregation. This Lactiplantibacillus plantarum (strain ATCC BAA-793 / NCIMB 8826 / WCFS1) (Lactobacillus plantarum) protein is Probable cell division protein WhiA.